Reading from the N-terminus, the 308-residue chain is Nodulation protein D 1 (308 aa).

An HTH lysR-type domain is found at leucine 6–threonine 63. Positions leucine 23–glycine 42 form a DNA-binding region, H-T-H motif.

It belongs to the LysR transcriptional regulatory family.

In terms of biological role, nodD regulates the expression of the nodABCFE genes which encode other nodulation proteins. NodD is also a negative regulator of its own expression. Binds flavonoids as inducers. The protein is Nodulation protein D 1 (nodD1) of Rhizobium tropici.